The following is a 311-amino-acid chain: Ornithine carbamoyltransferase (311 aa).

Residues S56 to T59, Q83, R107, and H134 to Q137 each bind carbamoyl phosphate. L-ornithine-binding positions include N166, D230, and S234 to M235. Carbamoyl phosphate-binding positions include C270–L271 and K298.

The protein belongs to the aspartate/ornithine carbamoyltransferase superfamily. OTCase family.

It is found in the cytoplasm. The enzyme catalyses carbamoyl phosphate + L-ornithine = L-citrulline + phosphate + H(+). It functions in the pathway amino-acid degradation; L-arginine degradation via ADI pathway; carbamoyl phosphate from L-arginine: step 2/2. Functionally, reversibly catalyzes the transfer of the carbamoyl group from carbamoyl phosphate (CP) to the N(epsilon) atom of ornithine (ORN) to produce L-citrulline. The sequence is that of Ornithine carbamoyltransferase from Ignicoccus hospitalis (strain KIN4/I / DSM 18386 / JCM 14125).